The sequence spans 254 residues: Ribosomal RNA small subunit methyltransferase J (254 aa).

Residues 107–108 (RD), 123–124 (ER), and D174 each bind S-adenosyl-L-methionine.

The protein belongs to the methyltransferase superfamily. RsmJ family.

It is found in the cytoplasm. The enzyme catalyses guanosine(1516) in 16S rRNA + S-adenosyl-L-methionine = N(2)-methylguanosine(1516) in 16S rRNA + S-adenosyl-L-homocysteine + H(+). Its function is as follows. Specifically methylates the guanosine in position 1516 of 16S rRNA. This Coxiella burnetii (strain Dugway 5J108-111) protein is Ribosomal RNA small subunit methyltransferase J.